Reading from the N-terminus, the 247-residue chain is 5-oxoprolinase subunit A (247 aa).

Belongs to the LamB/PxpA family. Forms a complex composed of PxpA, PxpB and PxpC.

The catalysed reaction is 5-oxo-L-proline + ATP + 2 H2O = L-glutamate + ADP + phosphate + H(+). Catalyzes the cleavage of 5-oxoproline to form L-glutamate coupled to the hydrolysis of ATP to ADP and inorganic phosphate. In Vibrio vulnificus (strain CMCP6), this protein is 5-oxoprolinase subunit A.